Here is a 34-residue protein sequence, read N- to C-terminus: Beta-theraphotoxin-Pmu1a (34 aa).

3 cysteine pairs are disulfide-bonded: Cys3–Cys18, Cys10–Cys23, and Cys17–Cys30. Position 34 is a leucine amide (Leu34).

It belongs to the neurotoxin 10 (Hwtx-1) family. 34 (Jztx-26) subfamily. Expressed by the venom gland.

Its subcellular location is the secreted. Functionally, spider venom neurotoxin that blocks voltage-gated sodium channels Nav1.3/SCN3A and Nav1.8/SCN10A in human (IC(50)=2 uM and IC(50)=4 uM, respectively) and rat (IC(50)=2 uM and IC(50)=2.5 uM, respectively). In Pterinochilus murinus (Mombasa golden starburst baboon spider), this protein is Beta-theraphotoxin-Pmu1a.